Reading from the N-terminus, the 361-residue chain is UDP-3-O-acylglucosamine N-acyltransferase (361 aa).

His253 (proton acceptor) is an active-site residue.

Belongs to the transferase hexapeptide repeat family. LpxD subfamily. Homotrimer.

It carries out the reaction a UDP-3-O-[(3R)-3-hydroxyacyl]-alpha-D-glucosamine + a (3R)-hydroxyacyl-[ACP] = a UDP-2-N,3-O-bis[(3R)-3-hydroxyacyl]-alpha-D-glucosamine + holo-[ACP] + H(+). It participates in bacterial outer membrane biogenesis; LPS lipid A biosynthesis. In terms of biological role, catalyzes the N-acylation of UDP-3-O-acylglucosamine using 3-hydroxyacyl-ACP as the acyl donor. Is involved in the biosynthesis of lipid A, a phosphorylated glycolipid that anchors the lipopolysaccharide to the outer membrane of the cell. The polypeptide is UDP-3-O-acylglucosamine N-acyltransferase (Burkholderia mallei (strain ATCC 23344)).